The following is a 675-amino-acid chain: Vitamin K-dependent protein S (675 aa).

An N-terminal signal peptide occupies residues 1–24 (MRVLGGRTGTLLACLALVLPVLEA). The propeptide occupies 25 to 41 (NFLSRQHASQVLIRRRR). The Gla domain maps to 42–87 (ANTLLEETKKGNLERECIEELCNKEEAREIFENNPETEYFYPKYLG). 4-carboxyglutamate occurs at positions 47, 48, 55, 57, 60, 61, 66, 67, 70, 73, and 77. C58 and C63 are disulfide-bonded. 16 disulfide bridges follow: C88–C113, C121–C134, C126–C143, C145–C154, C161–C175, C171–C184, C186–C199, C205–C217, C212–C226, C228–C241, C247–C256, C252–C265, C267–C282, C288–C567, C449–C475, and C638–C665. The segment at 88-116 (CLGSFRAGLFTAARLSTNAYPDLRSCVNA) is thrombin-sensitive. In terms of domain architecture, EGF-like 1 spans 117 to 155 (ISDQCNPLPCNEDGFMTCKDGQATFTCICKSGWQGEKCE). D136 is subject to (3R)-3-hydroxyaspartate. The 44-residue stretch at 157–200 (DINECKDPVNINGGCSQICENTPGSYHCSCKNGFVMLSNKKDCK) folds into the EGF-like 2; calcium-binding domain. N177 carries the (3R)-3-hydroxyasparagine modification. The EGF-like 3; calcium-binding domain maps to 201 to 242 (DVDECVLKPSICGTAVCKNIPGDFECECAEGYKYNPVSKSCD). Residue N219 is modified to (3R)-3-hydroxyasparagine. An EGF-like 4; calcium-binding domain is found at 243 to 283 (DVDECAENLCAQLCVNYPGGYSCYCDGKKGFKLAQDQKSCE). A (3R)-3-hydroxyasparagine modification is found at N258. Laminin G-like domains lie at 299–475 (LLYL…NKHC) and 484–665 (YYPG…AHSC). 2 N-linked (GlcNAc...) asparagine glycosylation sites follow: N499 and N509.

Post-translationally, the iron and 2-oxoglutarate dependent 3-hydroxylation of aspartate and asparagine is (R) stereospecific within EGF domains. Plasma.

The protein localises to the secreted. In terms of biological role, anticoagulant plasma protein; it is a cofactor to activated protein C in the degradation of coagulation factors Va and VIIIa. It helps to prevent coagulation and stimulating fibrinolysis. In Bos taurus (Bovine), this protein is Vitamin K-dependent protein S (PROS1).